The primary structure comprises 94 residues: Integration host factor subunit beta (94 aa).

It belongs to the bacterial histone-like protein family. As to quaternary structure, heterodimer of an alpha and a beta chain.

This protein is one of the two subunits of integration host factor, a specific DNA-binding protein that functions in genetic recombination as well as in transcriptional and translational control. In Haemophilus influenzae (strain PittGG), this protein is Integration host factor subunit beta.